A 99-amino-acid chain; its full sequence is Large ribosomal subunit protein uL23 (99 aa).

Belongs to the universal ribosomal protein uL23 family. In terms of assembly, part of the 50S ribosomal subunit. Contacts protein L29, and trigger factor when it is bound to the ribosome.

Its function is as follows. One of the early assembly proteins it binds 23S rRNA. One of the proteins that surrounds the polypeptide exit tunnel on the outside of the ribosome. Forms the main docking site for trigger factor binding to the ribosome. In Francisella philomiragia subsp. philomiragia (strain ATCC 25017 / CCUG 19701 / FSC 153 / O#319-036), this protein is Large ribosomal subunit protein uL23.